We begin with the raw amino-acid sequence, 336 residues long: Ornithine carbamoyltransferase, catabolic (336 aa).

Carbamoyl phosphate contacts are provided by residues 57–60 (STRT), glutamine 84, arginine 108, and 135–138 (HPTQ). L-ornithine is bound by residues asparagine 168, aspartate 232, and 236–237 (SM). Residues 274–275 (CL) and arginine 321 each bind carbamoyl phosphate.

This sequence belongs to the aspartate/ornithine carbamoyltransferase superfamily. OTCase family.

It localises to the cytoplasm. It carries out the reaction carbamoyl phosphate + L-ornithine = L-citrulline + phosphate + H(+). The protein operates within amino-acid degradation; L-arginine degradation via ADI pathway; carbamoyl phosphate from L-arginine: step 2/2. Its function is as follows. Reversibly catalyzes the transfer of the carbamoyl group from carbamoyl phosphate (CP) to the N(epsilon) atom of ornithine (ORN) to produce L-citrulline. This Ectopseudomonas mendocina (Pseudomonas mendocina) protein is Ornithine carbamoyltransferase, catabolic (arcB).